The chain runs to 378 residues: Ribosomal RNA large subunit methyltransferase G (378 aa).

It belongs to the methyltransferase superfamily. RlmG family.

The protein resides in the cytoplasm. It catalyses the reaction guanosine(1835) in 23S rRNA + S-adenosyl-L-methionine = N(2)-methylguanosine(1835) in 23S rRNA + S-adenosyl-L-homocysteine + H(+). Specifically methylates the guanine in position 1835 (m2G1835) of 23S rRNA. The sequence is that of Ribosomal RNA large subunit methyltransferase G from Shewanella baltica (strain OS185).